Reading from the N-terminus, the 76-residue chain is Translational regulator CsrA (76 aa).

It belongs to the CsrA/RsmA family. As to quaternary structure, homodimer; the beta-strands of each monomer intercalate to form a hydrophobic core, while the alpha-helices form wings that extend away from the core.

The protein localises to the cytoplasm. In terms of biological role, a translational regulator that binds mRNA to regulate translation initiation and/or mRNA stability. Usually binds in the 5'-UTR at or near the Shine-Dalgarno sequence preventing ribosome-binding, thus repressing translation. Its main target seems to be the major flagellin gene, while its function is anatagonized by FliW. In Helicobacter pylori (strain J99 / ATCC 700824) (Campylobacter pylori J99), this protein is Translational regulator CsrA.